An 83-amino-acid polypeptide reads, in one-letter code: Heterin-1 (83 aa).

The signal sequence occupies residues 1 to 22 (MNGKLLLVSLMVTMLVMQPAEA). The propeptide occupies 66 to 83 (VAGQIPFDEFMDILHYRP).

This sequence belongs to the non-disulfide-bridged peptide (NDBP) superfamily. Long chain multifunctional peptide (group 2) family. Expressed by the venom gland.

Its subcellular location is the secreted. The protein resides in the target cell membrane. Its function is as follows. Amphipathic peptide with potent activities against both Gram-positive and Gram-negative bacteria. Is the most active against the two Gram-positive Bacillus megaterium and Micrococcus luteus (MIC=4.0 uM for both). It has relatively low hemolytic activity against human erythrocytes. The polypeptide is Heterin-1 (Heterometrus spinifer (Asia giant forest scorpion)).